A 183-amino-acid polypeptide reads, in one-letter code: GTP cyclohydrolase 1 (183 aa).

Zn(2+) is bound by residues Cys71, His74, and Cys142.

The protein belongs to the GTP cyclohydrolase I family. As to quaternary structure, homomer.

It carries out the reaction GTP + H2O = 7,8-dihydroneopterin 3'-triphosphate + formate + H(+). Its pathway is cofactor biosynthesis; 7,8-dihydroneopterin triphosphate biosynthesis; 7,8-dihydroneopterin triphosphate from GTP: step 1/1. This Leptospira biflexa serovar Patoc (strain Patoc 1 / Ames) protein is GTP cyclohydrolase 1.